We begin with the raw amino-acid sequence, 444 residues long: C4-dicarboxylate transport protein (444 aa).

9 helical membrane passes run 18-40 (FYSH…GHFY), 53-75 (AFIK…TGIA), 90-112 (AMLY…ANVV), 142-159 (IVGF…GAFA), 163-180 (ILQV…LAMV), 201-222 (LVAI…FTIG), 232-254 (LAML…LGAV), 327-349 (LFIA…LLVA), and 364-386 (FITL…ALIL).

The protein belongs to the dicarboxylate/amino acid:cation symporter (DAACS) (TC 2.A.23) family.

The protein localises to the cell inner membrane. Responsible for the transport of dicarboxylates such as succinate, fumarate, and malate from the periplasm across the inner membrane. This transport system plays an important role in the energy supply of rhizobium-legume symbionts. The sequence is that of C4-dicarboxylate transport protein (dctA) from Rhizobium leguminosarum.